A 209-amino-acid chain; its full sequence is Lipid A acyltransferase PagP (209 aa).

The N-terminal stretch at 1 to 24 (MHLKRALITLSLITLPIIPFSSYA) is a signal peptide. Active-site residues include H81, D124, and S125.

Belongs to the lipid A palmitoyltransferase family. As to quaternary structure, homodimer.

It is found in the cell outer membrane. It carries out the reaction a lipid A + a 1,2-diacyl-sn-glycero-3-phosphocholine = a hepta-acyl lipid A + a 2-acyl-sn-glycero-3-phosphocholine. The catalysed reaction is a lipid IVA + a 1,2-diacyl-sn-glycero-3-phosphocholine = a lipid IVB + a 2-acyl-sn-glycero-3-phosphocholine. The enzyme catalyses a lipid IIA + a 1,2-diacyl-sn-glycero-3-phosphocholine = a lipid IIB + a 2-acyl-sn-glycero-3-phosphocholine. Transfers a fatty acid residue from the sn-1 position of a phospholipid to the N-linked hydroxyfatty acid chain on the proximal unit of lipid A or its precursors. The chain is Lipid A acyltransferase PagP from Pectobacterium parmentieri (strain WPP163) (Pectobacterium wasabiae (strain WPP163)).